The primary structure comprises 148 residues: SsrA-binding protein (148 aa).

The disordered stretch occupies residues 119–148; it reads AKGKKQHDKRETEKKRDWEREKARLMRSPG. Basic and acidic residues predominate over residues 126–142; that stretch reads DKRETEKKRDWEREKAR.

The protein belongs to the SmpB family.

The protein localises to the cytoplasm. Required for rescue of stalled ribosomes mediated by trans-translation. Binds to transfer-messenger RNA (tmRNA), required for stable association of tmRNA with ribosomes. tmRNA and SmpB together mimic tRNA shape, replacing the anticodon stem-loop with SmpB. tmRNA is encoded by the ssrA gene; the 2 termini fold to resemble tRNA(Ala) and it encodes a 'tag peptide', a short internal open reading frame. During trans-translation Ala-aminoacylated tmRNA acts like a tRNA, entering the A-site of stalled ribosomes, displacing the stalled mRNA. The ribosome then switches to translate the ORF on the tmRNA; the nascent peptide is terminated with the 'tag peptide' encoded by the tmRNA and targeted for degradation. The ribosome is freed to recommence translation, which seems to be the essential function of trans-translation. In Paraburkholderia xenovorans (strain LB400), this protein is SsrA-binding protein.